The primary structure comprises 279 residues: HTH-type transcriptional regulator HdfR (279 aa).

Residues 1–58 enclose the HTH lysR-type domain; the sequence is MDTELLKTFLEVSRTRHFGRAAESLYLTQSAVSFRIRQLENQLGVNLFTRHRNNIRLT. The H-T-H motif DNA-binding region spans 18–37; it reads FGRAAESLYLTQSAVSFRIR.

Belongs to the LysR transcriptional regulatory family.

Its function is as follows. Negatively regulates the transcription of the flagellar master operon flhDC by binding to the upstream region of the operon. The polypeptide is HTH-type transcriptional regulator HdfR (Escherichia coli (strain ATCC 8739 / DSM 1576 / NBRC 3972 / NCIMB 8545 / WDCM 00012 / Crooks)).